Here is a 445-residue protein sequence, read N- to C-terminus: MPFIATTESERTEMLQAIGVNSFDELIADIPYSVRLQRALELLPSLDEPQVRRLLERMAASNRCTAEYVSFLGGGAYDHFIPSAIKTIISRSEFYTAYTPYQAEVSQGTLQAIYEYQSLMCRLYGMDVANASMYDGATALAEAVLMAMNVTGRDQVVVAGKLHPHTTAVLKTYLEASGHQAIIQNALVDGRSDIAALKALVNQQVAAVVVQQPNFYGCLEEVEAIGAITHEQGAIFVVSADPLSLGVLAAPGSYGADIAVGEGQPLGSSQSFGGPYLGIFTVKQQLVRKIPGRLVGMTKDRDGEDGFILTLQTREQHIRREKATSNICSNQALNALQAAVYLSLLGKQGLQQVAAQSAQKAHYLANAIAALPGFSLKFTAPFFREFVVETPMPAAHLIEQMVEQRMFAGYDLATHGESGLLIAVTEQRTKEELDAFVAALSALKA.

It belongs to the GcvP family. N-terminal subunit subfamily. As to quaternary structure, the glycine cleavage system is composed of four proteins: P, T, L and H. In this organism, the P 'protein' is a heterodimer of two subunits.

It carries out the reaction N(6)-[(R)-lipoyl]-L-lysyl-[glycine-cleavage complex H protein] + glycine + H(+) = N(6)-[(R)-S(8)-aminomethyldihydrolipoyl]-L-lysyl-[glycine-cleavage complex H protein] + CO2. In terms of biological role, the glycine cleavage system catalyzes the degradation of glycine. The P protein binds the alpha-amino group of glycine through its pyridoxal phosphate cofactor; CO(2) is released and the remaining methylamine moiety is then transferred to the lipoamide cofactor of the H protein. In Chlorobium chlorochromatii (strain CaD3), this protein is Probable glycine dehydrogenase (decarboxylating) subunit 1.